The primary structure comprises 624 residues: Ceramide transfer protein (624 aa).

Polar residues predominate over residues 1–11 (MSDNQSWNSSG). The interval 1–24 (MSDNQSWNSSGSEEDPETESGPPV) is disordered. The PH domain maps to 23 to 117 (PVERCGVLSK…WIDAIEQHKT (95 aa)). Ser-126 carries the phosphoserine modification. The residue at position 132 (Ser-132) is a Phosphoserine; by PKD. Ser-135 carries the post-translational modification Phosphoserine. The stretch at 263–303 (IELMVKREDSWQKRLDKETEKKRRTEEAYKNAMTELKKKSH) forms a coiled coil. Ser-315 carries the post-translational modification Phosphoserine. Positions 321-327 (EFFDAVE) match the FFAT motif. The residue at position 372 (Tyr-372) is a Phosphotyrosine. Ser-373, Ser-377, and Ser-380 each carry phosphoserine. Residues 389–618 (DVHRFSSQVE…FTSYVQEKTA (230 aa)) enclose the START domain. The an N-acylsphing-4-enine site is built by Glu-472, Gln-493, Asn-530, and Tyr-579.

In terms of assembly, interacts with VAPA and VAPB. Interaction with VAPB is less efficient than with VAPA. Interacts (via FFAT motif) with MOSPD2 (via MSP domain). Phosphorylation on Ser-132 decreases the affinity toward phosphatidylinositol 4-phosphate at Golgi membranes and reduces ceramide transfer activity. Inactivated by hyperphosphorylation of serine residues by CSNK1G2/CK1 that triggers dissociation from the Golgi complex, thus down-regulating ER-to-Golgi transport of ceramide and sphingomyelin synthesis. In terms of tissue distribution, widely expressed.

Its subcellular location is the cytoplasm. It is found in the golgi apparatus. The protein resides in the endoplasmic reticulum. It catalyses the reaction N-hexadecanoylsphing-4-enine(in) = N-hexadecanoylsphing-4-enine(out). In terms of biological role, shelters ceramides and diacylglycerol lipids inside its START domain and mediates the intracellular trafficking of ceramides and diacylglycerol lipids in a non-vesicular manner. This Homo sapiens (Human) protein is Ceramide transfer protein.